The sequence spans 101 residues: NAD(P)H-quinone oxidoreductase subunit 4L, chloroplastic (101 aa).

Helical transmembrane passes span 2 to 22 (ILDS…YGLI), 32 to 52 (MSLE…SNFI), and 64 to 84 (IFIM…ILAI).

This sequence belongs to the complex I subunit 4L family. As to quaternary structure, NDH is composed of at least 16 different subunits, 5 of which are encoded in the nucleus.

The protein resides in the plastid. It localises to the chloroplast thylakoid membrane. The catalysed reaction is a plastoquinone + NADH + (n+1) H(+)(in) = a plastoquinol + NAD(+) + n H(+)(out). The enzyme catalyses a plastoquinone + NADPH + (n+1) H(+)(in) = a plastoquinol + NADP(+) + n H(+)(out). Functionally, NDH shuttles electrons from NAD(P)H:plastoquinone, via FMN and iron-sulfur (Fe-S) centers, to quinones in the photosynthetic chain and possibly in a chloroplast respiratory chain. The immediate electron acceptor for the enzyme in this species is believed to be plastoquinone. Couples the redox reaction to proton translocation, and thus conserves the redox energy in a proton gradient. In Chlorokybus atmophyticus (Soil alga), this protein is NAD(P)H-quinone oxidoreductase subunit 4L, chloroplastic.